The sequence spans 140 residues: Large ribosomal subunit protein bL21 (140 aa).

The disordered stretch occupies residues 106 to 140; sequence SGVKPAVGARTKIEPAVKPAKAKKSEAEASAEDAN.

The protein belongs to the bacterial ribosomal protein bL21 family. In terms of assembly, part of the 50S ribosomal subunit. Contacts protein L20.

This protein binds to 23S rRNA in the presence of protein L20. The protein is Large ribosomal subunit protein bL21 of Paracoccus denitrificans (strain Pd 1222).